A 208-amino-acid chain; its full sequence is Imidazoleglycerol-phosphate dehydratase (208 aa).

It belongs to the imidazoleglycerol-phosphate dehydratase family.

It localises to the cytoplasm. The catalysed reaction is D-erythro-1-(imidazol-4-yl)glycerol 3-phosphate = 3-(imidazol-4-yl)-2-oxopropyl phosphate + H2O. It functions in the pathway amino-acid biosynthesis; L-histidine biosynthesis; L-histidine from 5-phospho-alpha-D-ribose 1-diphosphate: step 6/9. The sequence is that of Imidazoleglycerol-phosphate dehydratase from Pseudarthrobacter chlorophenolicus (strain ATCC 700700 / DSM 12829 / CIP 107037 / JCM 12360 / KCTC 9906 / NCIMB 13794 / A6) (Arthrobacter chlorophenolicus).